Reading from the N-terminus, the 278-residue chain is Expansin-B17 (278 aa).

The first 26 residues, Met-1–Ala-26, serve as a signal peptide directing secretion. Positions Gly-66–Lys-176 constitute an Expansin-like EG45 domain. Cystine bridges form between Cys-69-Cys-98, Cys-101-Cys-171, and Cys-106-Cys-112. The region spanning Phe-189–Ser-270 is the Expansin-like CBD domain.

It belongs to the expansin family. Expansin B subfamily.

It localises to the secreted. Its subcellular location is the cell wall. The protein resides in the membrane. Functionally, may cause loosening and extension of plant cell walls by disrupting non-covalent bonding between cellulose microfibrils and matrix glucans. No enzymatic activity has been found. May be required for rapid internodal elongation in deepwater rice during submergence. This Oryza sativa subsp. japonica (Rice) protein is Expansin-B17 (EXPB17).